A 338-amino-acid polypeptide reads, in one-letter code: Cytoskeleton protein RodZ (338 aa).

The Cytoplasmic portion of the chain corresponds to 1–111 (MNTEATHDQN…LGKRRKKRDG (111 aa)). One can recognise an HTH cro/C1-type domain in the interval 19 to 71 (LRNAREQLGLSQQAVAERLCLKVSTVRDIEEDKAPADLASTFLRGYIRSYARL). The H-T-H motif DNA-binding region spans 30-49 (QQAVAERLCLKVSTVRDIEE). Residues 112–132 (WLMTFTWLVLFVVIGLSGAWW) traverse the membrane as a helical; Signal-anchor for type II membrane protein segment. Topologically, residues 133–338 (WQDHKAQQEE…TLNAEQSPAQ (206 aa)) are periplasmic. Positions 155–169 (NANGTNSQSIPLENS) are enriched in polar residues. Residues 155–240 (NANGTNSQSI…TTPDTATPLP (86 aa)) form a disordered region. Residues 170 to 188 (TTTVPEATPAPAAPVDTTA) show a composition bias toward low complexity. The segment covering 203–217 (EPQQNAVVPPSQANV) has biased composition (polar residues). Residues 218-240 (DTATTAPAAPATTTTPDTATPLP) are compositionally biased toward low complexity.

Belongs to the RodZ family.

It localises to the cell inner membrane. Cytoskeletal protein that is involved in cell-shape control through regulation of the length of the long axis. The sequence is that of Cytoskeleton protein RodZ from Escherichia fergusonii (strain ATCC 35469 / DSM 13698 / CCUG 18766 / IAM 14443 / JCM 21226 / LMG 7866 / NBRC 102419 / NCTC 12128 / CDC 0568-73).